Consider the following 574-residue polypeptide: Phosphoenolpyruvate-protein phosphotransferase (574 aa).

His190 functions as the Tele-phosphohistidine intermediate in the catalytic mechanism. Residues Arg297 and Arg333 each contribute to the phosphoenolpyruvate site. Glu432 and Asp456 together coordinate Mg(2+). Phosphoenolpyruvate contacts are provided by residues 455-456 and Arg466; that span reads ND. Cys503 serves as the catalytic Proton donor.

Belongs to the PEP-utilizing enzyme family. In terms of assembly, homodimer. The cofactor is Mg(2+).

Its subcellular location is the cytoplasm. The enzyme catalyses L-histidyl-[protein] + phosphoenolpyruvate = N(pros)-phospho-L-histidyl-[protein] + pyruvate. Its function is as follows. General (non sugar-specific) component of the phosphoenolpyruvate-dependent sugar phosphotransferase system (sugar PTS). This major carbohydrate active-transport system catalyzes the phosphorylation of incoming sugar substrates concomitantly with their translocation across the cell membrane. Enzyme I transfers the phosphoryl group from phosphoenolpyruvate (PEP) to the phosphoryl carrier protein (HPr). This chain is Phosphoenolpyruvate-protein phosphotransferase (ptsI), found in Latilactobacillus sakei (Lactobacillus sakei).